The following is a 375-amino-acid chain: E3 ubiquitin-protein ligase RHF2A (375 aa).

The RING-type; atypical zinc-finger motif lies at 33 to 74 (CSICLESFCESDPSTLTSCKHEYHLQCILEWCQRSSQCPMCW). Residues 146 to 159 (RARHGVRREGHRSR) are compositionally biased toward basic residues. 3 disordered regions span residues 146-165 (RARH…SQGH), 172-262 (SSQP…SESL), and 318-375 (ERLE…SGSS). A compositionally biased stretch (pro residues) spans 178–188 (SSPPPHPPMPS). 2 stretches are compositionally biased toward polar residues: residues 211–245 (SHQS…SSPS) and 327–336 (RPSTASVSDV). Over residues 337–365 (SENHTPETNNEHNRAAAGDEHSVNERGVK) the composition is skewed to basic and acidic residues.

The catalysed reaction is S-ubiquitinyl-[E2 ubiquitin-conjugating enzyme]-L-cysteine + [acceptor protein]-L-lysine = [E2 ubiquitin-conjugating enzyme]-L-cysteine + N(6)-ubiquitinyl-[acceptor protein]-L-lysine.. It functions in the pathway protein modification; protein ubiquitination. E3 ubiquitin-protein ligase involved in the positive regulation of the gametogenesis progression. Required for the degradation of KRP6, a cyclin-dependent kinase inhibitor which accumulates during meiosis and blocks the progression of subsequent mitoses during gametophytes development. Functions in association with RHF1A. This Arabidopsis thaliana (Mouse-ear cress) protein is E3 ubiquitin-protein ligase RHF2A.